The primary structure comprises 481 residues: Betaine aldehyde dehydrogenase 2 (481 aa).

2 residues coordinate K(+): Ser-29 and Asp-96. 152–154 (GAW) serves as a coordination point for NAD(+). The active-site Charge relay system is the Lys-164. Residue 178–181 (KPSE) coordinates NAD(+). Val-182 serves as a coordination point for K(+). 231-234 (SVKT) lines the NAD(+) pocket. Ile-246 provides a ligand contact to K(+). Glu-252 functions as the Proton acceptor in the catalytic mechanism. NAD(+) contacts are provided by Gly-254, Cys-286, and Glu-383. Catalysis depends on Cys-286, which acts as the Nucleophile. Cysteine sulfenic acid (-SOH) is present on Cys-286. K(+) contacts are provided by Lys-453 and Gly-456. Glu-460 (charge relay system) is an active-site residue.

Belongs to the aldehyde dehydrogenase family. Dimer of dimers. The cofactor is K(+).

It carries out the reaction betaine aldehyde + NAD(+) + H2O = glycine betaine + NADH + 2 H(+). It functions in the pathway amine and polyamine biosynthesis; betaine biosynthesis via choline pathway; betaine from betaine aldehyde: step 1/1. Its function is as follows. Involved in the biosynthesis of the osmoprotectant glycine betaine. Catalyzes the irreversible oxidation of betaine aldehyde to the corresponding acid. In Rhizobium meliloti (strain 1021) (Ensifer meliloti), this protein is Betaine aldehyde dehydrogenase 2.